The chain runs to 128 residues: Large-conductance mechanosensitive channel (128 aa).

2 helical membrane-spanning segments follow: residues 10–30 (FAMR…SAFG) and 76–96 (GLFI…FMMI).

This sequence belongs to the MscL family. Homopentamer.

It localises to the cell inner membrane. Functionally, channel that opens in response to stretch forces in the membrane lipid bilayer. May participate in the regulation of osmotic pressure changes within the cell. The chain is Large-conductance mechanosensitive channel from Haemophilus influenzae (strain 86-028NP).